The sequence spans 605 residues: Probable potassium transport system protein Kup (605 aa).

Transmembrane regions (helical) follow at residues 17 to 37 (GLVFGDIGTSPIYTLTVIFAL), 45 to 65 (VFGILSMVVWTLIILVTVEYA), 96 to 116 (IAFVGFLSFVGVSLLLGDGVI), 140 to 160 (LGTLILIAALIAVVLFIFQFK), 165 to 185 (VAAAFGPLMVLWFGALTVSGL), 211 to 231 (GISAFFVLSEVILCATGGEAL), 246 to 266 (AWYFVFVALIINYLGQGAFAL), 286 to 306 (LYIPFLILTILATVIASQALI), 338 to 358 (IYIGSVNWFLMLLVIFIMLIF), 367 to 387 (AYGLAVTGTMTITGIMMTIIF), 394 to 414 (WKVPVAVAVTIVDVVFLISNL), and 417 to 437 (LPHGGYWSIILASVPFATILI).

Belongs to the HAK/KUP transporter (TC 2.A.72) family.

The protein resides in the cell inner membrane. It catalyses the reaction K(+)(in) + H(+)(in) = K(+)(out) + H(+)(out). In terms of biological role, transport of potassium into the cell. Likely operates as a K(+):H(+) symporter. The chain is Probable potassium transport system protein Kup from Geotalea uraniireducens (strain Rf4) (Geobacter uraniireducens).